Consider the following 428-residue polypeptide: D-amino acid dehydrogenase (428 aa).

3-17 (VVILGSGVVGVASAY) is a binding site for FAD.

The protein belongs to the DadA oxidoreductase family. FAD is required as a cofactor.

It catalyses the reaction a D-alpha-amino acid + A + H2O = a 2-oxocarboxylate + AH2 + NH4(+). It participates in amino-acid degradation; D-alanine degradation; NH(3) and pyruvate from D-alanine: step 1/1. In terms of biological role, oxidative deamination of D-amino acids. This chain is D-amino acid dehydrogenase, found in Burkholderia cenocepacia (strain ATCC BAA-245 / DSM 16553 / LMG 16656 / NCTC 13227 / J2315 / CF5610) (Burkholderia cepacia (strain J2315)).